The primary structure comprises 116 residues: Somatostatin (116 aa).

The first 24 residues, Met-1 to Gly-24, serve as a signal peptide directing secretion. The propeptide occupies Ala-25–Arg-88. Ala-43 is subject to Alanine amide. The interval Gln-62–Arg-99 is disordered. Cys-105 and Cys-116 form a disulfide bridge.

The protein belongs to the somatostatin family. In terms of processing, C-terminal amidation of the neuronostatin peptide is required for its biological activity, including for the regulation of mean arterial pressure. Expressed in the pancreas and the spleen (at protein level).

Its subcellular location is the secreted. In terms of biological role, inhibits the secretion of pituitary hormones, including that of growth hormone/somatotropin (GH1), PRL, ACTH, luteinizing hormone (LH) and TSH. Also impairs ghrelin- and GnRH-stimulated secretion of GH1 and LH; the inhibition of ghrelin-stimulated secretion of GH1 can be further increased by neuronostatin. Functionally, may enhance low-glucose-induced glucagon release by pancreatic alpha cells. This effect may be mediated by binding to GPR107 and PKA activation. May regulate cardiac contractile function. May compromise cardiomyocyte viability. In the central nervous system, may impair memory retention and may affect hippocampal excitability. May also have anxiolytic and anorexigenic effects. May play a role in arterial pressure regulation. May inhibit basal, but not ghrelin- or GnRH-stimulated secretion of GH1 or LH, but does not affect the release of other pituitary hormones, including PRL, ACTH, FSH or TSH. Potentiates inhibitory action of somatostatin on ghrelin-stimulated secretion of GH1, but not that on GnRH-stimulated secretion of LH. This is Somatostatin (SST) from Sus scrofa (Pig).